We begin with the raw amino-acid sequence, 433 residues long: uncharacterized protein (433 aa).

11 helical membrane passes run 28–48 (FAAL…SHII), 56–76 (IYGW…YPFF), 102–122 (IWIF…AVGL), 126–146 (AILT…FIVI), 164–184 (LSKL…IIAL), 207–227 (ALGF…ISAI), 250–270 (FNVG…LGAL), 304–324 (GLIA…VIDG), 345–365 (SYLN…IFYF), 375–395 (FAMI…LSLV), and 406–426 (LLWL…LFIA).

It is found in the cell membrane. This is an uncharacterized protein from Pasteurella multocida (strain Pm70).